Reading from the N-terminus, the 444-residue chain is 23S rRNA (uracil(1939)-C(5))-methyltransferase RlmD (444 aa).

In terms of domain architecture, TRAM spans 5–67; that stretch reads RNRFDRTPFQ…RHFDEAKTVE (63 aa). Positions 80, 86, 89, and 168 each coordinate [4Fe-4S] cluster. Residues Q276, F305, N310, E326, D353, and D374 each contribute to the S-adenosyl-L-methionine site. The active-site Nucleophile is the C400.

It belongs to the class I-like SAM-binding methyltransferase superfamily. RNA M5U methyltransferase family. RlmD subfamily.

The enzyme catalyses uridine(1939) in 23S rRNA + S-adenosyl-L-methionine = 5-methyluridine(1939) in 23S rRNA + S-adenosyl-L-homocysteine + H(+). In terms of biological role, catalyzes the formation of 5-methyl-uridine at position 1939 (m5U1939) in 23S rRNA. This Xanthomonas campestris pv. campestris (strain 8004) protein is 23S rRNA (uracil(1939)-C(5))-methyltransferase RlmD.